The chain runs to 398 residues: GATA transcription factor 21 (398 aa).

Positions 20-51 are disordered; it reads QPFFYPLGSSSSLHHHHHHHHHQVPSNSSSSS. Basic residues predominate over residues 32–42; the sequence is LHHHHHHHHHQ. Positions 109-116 match the Nuclear localization signal motif; it reads PKKETRLK. Residues 122–144 form a disordered region; that stretch reads KDHEDQPHPLHQNPTKPDSDSDK. The GATA-type zinc finger occupies 226-280; that stretch reads NGVIRVCSDCNTTKTPLWRSGPRGPKSLCNACGIRQRKARRAAMAAAAAAGDQEV. The interval 289–353 is disordered; it reads LPLKKKLQNK…KSTTSSNSSI (65 aa). The span at 291–302 shows a compositional bias: basic residues; it reads LKKKLQNKKKRS. The segment covering 343 to 353 has biased composition (low complexity); it reads SKSTTSSNSSI.

Belongs to the type IV zinc-finger family. Class B subfamily. Interacts with SNL1. Forms heterodimers with GATA18. As to expression, expressed predominantly in leaves, and barely in stems, flowers and siliques.

The protein resides in the nucleus. In terms of biological role, transcriptional regulator that specifically binds 5'-GATA-3' or 5'-GAT-3' motifs within gene promoters. Involved in the modulation of chloroplast development, growth and division in a cytokinin-dependent manner. Repressor of the gibberellic acid (GA) signaling pathway that represses flowering and modulates greening, in a SOC1-dependent manner. Prevents the accumulation of SOC1 during flowering. Promotes chlorophyll biosynthesis throughout the plant, by regulating chlorophyll biosynthetic genes (e.g. HEMA1 and GUN4) and chloroplast localized glutamate synthase (e.g. GLU1). Involved in the regulation of sugar-sensing genes (e.g. HXK1, HXK2, STP13 and PLT6). Regulator of germination, senescence, elongation growth and flowering time. Also influences leaf starch content. In Arabidopsis thaliana (Mouse-ear cress), this protein is GATA transcription factor 21.